A 440-amino-acid chain; its full sequence is Thymidine phosphorylase (440 aa).

The protein belongs to the thymidine/pyrimidine-nucleoside phosphorylase family. Homodimer.

The catalysed reaction is thymidine + phosphate = 2-deoxy-alpha-D-ribose 1-phosphate + thymine. Its pathway is pyrimidine metabolism; dTMP biosynthesis via salvage pathway; dTMP from thymine: step 1/2. In terms of biological role, the enzymes which catalyze the reversible phosphorolysis of pyrimidine nucleosides are involved in the degradation of these compounds and in their utilization as carbon and energy sources, or in the rescue of pyrimidine bases for nucleotide synthesis. The polypeptide is Thymidine phosphorylase (Yersinia pestis).